Here is a 101-residue protein sequence, read N- to C-terminus: MSSTPAAASATPSHGALPAYDTPLGITNPPIDELLARTSSKYALVIYAAKRARQINDYYNQLGDGILEYVGPLVEPGLQEKPLSIALREIHSDLLEHTEGE.

The segment covering 1 to 13 has biased composition (low complexity); sequence MSSTPAAASATPS. Positions 1-22 are disordered; the sequence is MSSTPAAASATPSHGALPAYDT.

Belongs to the RNA polymerase subunit omega family. The RNAP catalytic core consists of 2 alpha, 1 beta, 1 beta' and 1 omega subunit. When a sigma factor is associated with the core the holoenzyme is formed, which can initiate transcription.

The enzyme catalyses RNA(n) + a ribonucleoside 5'-triphosphate = RNA(n+1) + diphosphate. Functionally, promotes RNA polymerase assembly. Latches the N- and C-terminal regions of the beta' subunit thereby facilitating its interaction with the beta and alpha subunits. This is DNA-directed RNA polymerase subunit omega from Rhodococcus jostii (strain RHA1).